The sequence spans 191 residues: Cell division protein SepF (191 aa).

Positions 153-178 (FPEEVSPSNISSKKTSPYSLETNTTP) are enriched in polar residues. The segment at 153-191 (FPEEVSPSNISSKKTSPYSLETNTTPEPAWGESKLSAFS) is disordered.

Belongs to the SepF family. As to quaternary structure, homodimer. Interacts with FtsZ.

The protein localises to the cytoplasm. In terms of biological role, cell division protein that is part of the divisome complex and is recruited early to the Z-ring. Probably stimulates Z-ring formation, perhaps through the cross-linking of FtsZ protofilaments. Its function overlaps with FtsA. The polypeptide is Cell division protein SepF (Prochlorococcus marinus (strain MIT 9515)).